The sequence spans 206 residues: Small ribosomal subunit protein uS4 (206 aa).

Positions 96–156 (GRLDNVVYRM…EKAKKQSRVK (61 aa)) constitute an S4 RNA-binding domain.

This sequence belongs to the universal ribosomal protein uS4 family. Part of the 30S ribosomal subunit. Contacts protein S5. The interaction surface between S4 and S5 is involved in control of translational fidelity.

One of the primary rRNA binding proteins, it binds directly to 16S rRNA where it nucleates assembly of the body of the 30S subunit. Functionally, with S5 and S12 plays an important role in translational accuracy. The sequence is that of Small ribosomal subunit protein uS4 from Klebsiella pneumoniae (strain 342).